The following is a 411-amino-acid chain: Na(+)-translocating NADH-quinone reductase subunit F (411 aa).

A helical membrane pass occupies residues 5–25; the sequence is VILALGIAAFTVIVLVLVAII. The 95-residue stretch at 36-130 folds into the 2Fe-2S ferredoxin-type domain; it reads GDITIDINDD…NMEVELPEEI (95 aa). Positions 73, 79, 82, and 114 each coordinate [2Fe-2S] cluster. An FAD-binding FR-type domain is found at 133–273; sequence VKKWECTVIS…SGPFGEFFAK (141 aa).

This sequence belongs to the NqrF family. Composed of six subunits; NqrA, NqrB, NqrC, NqrD, NqrE and NqrF. It depends on [2Fe-2S] cluster as a cofactor. The cofactor is FAD.

It is found in the cell inner membrane. It carries out the reaction a ubiquinone + n Na(+)(in) + NADH + H(+) = a ubiquinol + n Na(+)(out) + NAD(+). Its function is as follows. NQR complex catalyzes the reduction of ubiquinone-1 to ubiquinol by two successive reactions, coupled with the transport of Na(+) ions from the cytoplasm to the periplasm. The first step is catalyzed by NqrF, which accepts electrons from NADH and reduces ubiquinone-1 to ubisemiquinone by a one-electron transfer pathway. The protein is Na(+)-translocating NADH-quinone reductase subunit F of Haemophilus influenzae (strain PittGG).